Consider the following 173-residue polypeptide: Cytochrome c-type biogenesis protein CcmE (173 aa).

The Cytoplasmic segment spans residues Met-1–Arg-8. A helical; Signal-anchor for type II membrane protein membrane pass occupies residues Phe-9–Ala-29. Topologically, residues Leu-30–Lys-173 are periplasmic. 2 residues coordinate heme: His-131 and Tyr-135. The disordered stretch occupies residues Gly-152 to Lys-173. Positions Ala-156–Lys-173 are enriched in basic and acidic residues.

The protein belongs to the CcmE/CycJ family.

Its subcellular location is the cell inner membrane. Heme chaperone required for the biogenesis of c-type cytochromes. Transiently binds heme delivered by CcmC and transfers the heme to apo-cytochromes in a process facilitated by CcmF and CcmH. This Haemophilus influenzae (strain PittEE) protein is Cytochrome c-type biogenesis protein CcmE.